Consider the following 289-residue polypeptide: 4-hydroxy-tetrahydrodipicolinate synthase (289 aa).

Position 43 (T43) interacts with pyruvate. The active-site Proton donor/acceptor is Y131. The active-site Schiff-base intermediate with substrate is the K160. V200 serves as a coordination point for pyruvate.

It belongs to the DapA family. As to quaternary structure, homotetramer; dimer of dimers.

It is found in the cytoplasm. The enzyme catalyses L-aspartate 4-semialdehyde + pyruvate = (2S,4S)-4-hydroxy-2,3,4,5-tetrahydrodipicolinate + H2O + H(+). The protein operates within amino-acid biosynthesis; L-lysine biosynthesis via DAP pathway; (S)-tetrahydrodipicolinate from L-aspartate: step 3/4. Catalyzes the condensation of (S)-aspartate-beta-semialdehyde [(S)-ASA] and pyruvate to 4-hydroxy-tetrahydrodipicolinate (HTPA). This Methanococcus maripaludis (strain DSM 14266 / JCM 13030 / NBRC 101832 / S2 / LL) protein is 4-hydroxy-tetrahydrodipicolinate synthase.